A 315-amino-acid polypeptide reads, in one-letter code: MAQFQIECVESNTEESRNHYSKFILEPLERGQGTTVGNALRRVLLSNLEGTAVTAVRIAGVSHEFATVPGVREDVLEIIMRMKEVILKSYSSQAQIGRLLVNGPTTITASHFDLPSEVEVIDPTQYVATIAEGGKLEMEFRIERGKGYRTVERGREEATSLDFLQIDSIFMPVRKVNYSVEEVRADGSIPKDRLLLEVWTNGSISPQEALSSAAGILVDLFNPLKDISLEPTDTNSDIPDDPTAQIPIEELQLSVRAYNCLKRAQVNSVADLLDYTQEDLLEIKNFGQKSAEEVVEALQRRLGITLPQERSSKHN.

The segment at 1–228 is alpha N-terminal domain (alpha-NTD); that stretch reads MAQFQIECVE…DLFNPLKDIS (228 aa). An alpha C-terminal domain (alpha-CTD) region spans residues 243-315; that stretch reads TAQIPIEELQ…LPQERSSKHN (73 aa).

The protein belongs to the RNA polymerase alpha chain family. Homodimer. In cyanobacteria the RNAP catalytic core is composed of 2 alpha, 1 beta, 1 beta', 1 gamma and 1 omega subunit. When a sigma factor is associated with the core the holoenzyme is formed, which can initiate transcription.

It carries out the reaction RNA(n) + a ribonucleoside 5'-triphosphate = RNA(n+1) + diphosphate. Its function is as follows. DNA-dependent RNA polymerase catalyzes the transcription of DNA into RNA using the four ribonucleoside triphosphates as substrates. The sequence is that of DNA-directed RNA polymerase subunit alpha from Nostoc sp. (strain PCC 7120 / SAG 25.82 / UTEX 2576).